Consider the following 87-residue polypeptide: DNA-directed RNA polymerase subunit omega (87 aa).

This sequence belongs to the RNA polymerase subunit omega family. In terms of assembly, the RNAP catalytic core consists of 2 alpha, 1 beta, 1 beta' and 1 omega subunit. When a sigma factor is associated with the core the holoenzyme is formed, which can initiate transcription.

The enzyme catalyses RNA(n) + a ribonucleoside 5'-triphosphate = RNA(n+1) + diphosphate. Functionally, promotes RNA polymerase assembly. Latches the N- and C-terminal regions of the beta' subunit thereby facilitating its interaction with the beta and alpha subunits. The sequence is that of DNA-directed RNA polymerase subunit omega from Leifsonia xyli subsp. xyli (strain CTCB07).